A 358-amino-acid polypeptide reads, in one-letter code: NADH-quinone oxidoreductase subunit H (358 aa).

8 consecutive transmembrane segments (helical) span residues 30 to 50 (IAVG…LIYM), 96 to 116 (FLYN…FACI), 129 to 149 (VGVF…LLAG), 168 to 188 (IISY…LMGT), 201 to 221 (GWFI…YLIA), 265 to 285 (FIVA…LHII), 297 to 317 (IPGF…LMWI), and 336 to 356 (YLVP…AFGF).

It belongs to the complex I subunit 1 family. As to quaternary structure, NDH-1 is composed of 14 different subunits. Subunits NuoA, H, J, K, L, M, N constitute the membrane sector of the complex.

It is found in the cell inner membrane. The catalysed reaction is a quinone + NADH + 5 H(+)(in) = a quinol + NAD(+) + 4 H(+)(out). Functionally, NDH-1 shuttles electrons from NADH, via FMN and iron-sulfur (Fe-S) centers, to quinones in the respiratory chain. The immediate electron acceptor for the enzyme in this species is believed to be ubiquinone. Couples the redox reaction to proton translocation (for every two electrons transferred, four hydrogen ions are translocated across the cytoplasmic membrane), and thus conserves the redox energy in a proton gradient. This subunit may bind ubiquinone. The chain is NADH-quinone oxidoreductase subunit H from Bacteroides thetaiotaomicron (strain ATCC 29148 / DSM 2079 / JCM 5827 / CCUG 10774 / NCTC 10582 / VPI-5482 / E50).